The chain runs to 368 residues: Glutamine synthetase root isozyme 2 (368 aa).

Positions 19 to 99 (IIAEYIWVGG…VMCDCYEPNG (81 aa)) constitute a GS beta-grasp domain. Positions 38-66 (RTLSGPVDDPSKLPKWNFDGSSTGQAPGD) are disordered. The GS catalytic domain maps to 106–368 (KRHGAAKIFS…NGDGKGAAAP (263 aa)).

This sequence belongs to the glutamine synthetase family. Homooctamer. In terms of tissue distribution, found mainly in the vascular tissues of seedling roots.

The protein localises to the cytoplasm. It catalyses the reaction L-glutamate + NH4(+) + ATP = L-glutamine + ADP + phosphate + H(+). In terms of biological role, plays a role in the flow of nitrogen into nitrogenous organic compounds. This chain is Glutamine synthetase root isozyme 2 (GLN2), found in Zea mays (Maize).